A 156-amino-acid polypeptide reads, in one-letter code: Small ribosomal subunit protein uS7c (156 aa).

The protein belongs to the universal ribosomal protein uS7 family. In terms of assembly, part of the 30S ribosomal subunit.

It localises to the plastid. It is found in the chloroplast. In terms of biological role, one of the primary rRNA binding proteins, it binds directly to 16S rRNA where it nucleates assembly of the head domain of the 30S subunit. This chain is Small ribosomal subunit protein uS7c (rps7), found in Rhodomonas salina (Cryptomonas salina).